We begin with the raw amino-acid sequence, 304 residues long: uncharacterized protein (304 aa).

Helical transmembrane passes span 9–29 (VFYV…SIHF), 67–87 (IILY…GNMF), 100–120 (AGSI…GIFF), 131–151 (EFYI…INSS), 159–179 (FFLG…QNLI), 189–209 (AVVI…CLAF), 222–242 (IGML…GMLM), 252–272 (ITVF…IGYL), and 278–298 (INIY…LALK). EamA domains lie at 13–148 (LLMG…IFVI) and 171–298 (FIQS…LALK).

This sequence belongs to the EamA transporter family.

It is found in the cell membrane. This is an uncharacterized protein from Haemophilus influenzae (strain ATCC 51907 / DSM 11121 / KW20 / Rd).